Here is a 247-residue protein sequence, read N- to C-terminus: 2,3-bisphosphoglycerate-dependent phosphoglycerate mutase (247 aa).

Substrate contacts are provided by residues 7 to 14 (RHGESEWN), 20 to 21 (TG), arginine 59, 86 to 89 (ERHY), lysine 97, 113 to 114 (RR), and 182 to 183 (GN). Histidine 8 acts as the Tele-phosphohistidine intermediate in catalysis. The active-site Proton donor/acceptor is the glutamate 86.

It belongs to the phosphoglycerate mutase family. BPG-dependent PGAM subfamily.

It carries out the reaction (2R)-2-phosphoglycerate = (2R)-3-phosphoglycerate. It functions in the pathway carbohydrate degradation; glycolysis; pyruvate from D-glyceraldehyde 3-phosphate: step 3/5. Its function is as follows. Catalyzes the interconversion of 2-phosphoglycerate and 3-phosphoglycerate. The sequence is that of 2,3-bisphosphoglycerate-dependent phosphoglycerate mutase from Treponema denticola (strain ATCC 35405 / DSM 14222 / CIP 103919 / JCM 8153 / KCTC 15104).